Reading from the N-terminus, the 218-residue chain is Large ribosomal subunit protein uL3 (218 aa).

The protein belongs to the universal ribosomal protein uL3 family. As to quaternary structure, part of the 50S ribosomal subunit. Forms a cluster with proteins L14 and L19.

In terms of biological role, one of the primary rRNA binding proteins, it binds directly near the 3'-end of the 23S rRNA, where it nucleates assembly of the 50S subunit. The protein is Large ribosomal subunit protein uL3 of Corynebacterium jeikeium (strain K411).